Reading from the N-terminus, the 359-residue chain is Mitochondrial glutathione transporter SLC25A39 (359 aa).

Residues 1 to 14 are Mitochondrial intermembrane-facing; it reads MDDQDPGGISPLQQ. 3 Solcar repeats span residues 9–151, 159–243, and 253–347; these read ISPL…LKAF, SDLY…VKSQ, and TSVG…GKSF. A helical transmembrane segment spans residues 15–35; the sequence is MVASGAGAVVTSLFMTPLDVV. At 36–121 the chain is on the mitochondrial matrix side; it reads KVRLQSQRPT…VKIVRHEGTR (86 aa). Positions 74, 78, 88, and 94 each coordinate [2Fe-2S] cluster. Residues 122 to 142 form a helical membrane-spanning segment; it reads TLWSGLPATLVMTVPATAIYF. Topologically, residues 143–164 are mitochondrial intermembrane; that stretch reads TAYDQLKAFLCGQSLTSDLYAP. A helical membrane pass occupies residues 165–185; it reads MVAGALARMGTVTVVSPLELV. The Mitochondrial matrix portion of the chain corresponds to 186 to 214; sequence RTKLQAQHVSYRELAACVQAAVAQGGWRS. The helical transmembrane segment at 215 to 235 threads the bilayer; sequence LWLGWGPTALRDVPFSALYWF. At 236–255 the chain is on the mitochondrial intermembrane side; sequence NYELVKSQLNGPRQKEQTSV. The helical transmembrane segment at 256-276 threads the bilayer; it reads GISFVAGGISGMVAATLTLPF. Over 277–317 the chain is Mitochondrial matrix; it reads DVVKTQRQMSLGAVEAMRVKPPRVDSTWLLLRRIQAESGTR. Residues 318–338 form a helical membrane-spanning segment; sequence GLFAGFLPRIIKAAPSCAIMI. Residues 339 to 359 are Mitochondrial intermembrane-facing; the sequence is STYEFGKSFFHRLNQEQPLGH.

This sequence belongs to the mitochondrial carrier (TC 2.A.29) family. Cleaved and degraded by AFG3L2; degradation by AFG3L2 is regulated by the ability of SLC25A39 to bind iron-sulfur. In absence of mitochondrial glutathione, SLC25A39 binds iron-sulfur, preventing cleavage and degradation by AFG3L2. The presence of mitochondrial glutathione prevents iron-sulfur-binding to SLC25A39, promoting cleavage and degradation by AFG3L2.

The protein resides in the mitochondrion inner membrane. The enzyme catalyses glutathione(in) = glutathione(out). With respect to regulation, the activity of SLC25A39 is regulated by levels of mitochondrial glutathione via its ability to bind [2Fe-2S] iron-sulfur cluster. Upon physiological levels of mitochondrial glutathione, glutathione prevents iron-sulfur-binding to SLC25A39 promoting cleavage and degradation by AFG3L2. Upon depletion of mitochondrial glutathione, SLC25A39 binds iron-sulfur, preventing cleavage and degradation by AFG3L2. In terms of biological role, mitochondrial transporter required for glutathione import into mitochondria. Glutathione, which plays key roles in oxidative metabolism, is produced exclusively in the cytosol and is imported in many organelles. Mitochondrial glutathione is required for the activity and stability of proteins containing iron-sulfur clusters, as well as erythropoiesis. The chain is Mitochondrial glutathione transporter SLC25A39 (Slc25a39) from Rattus norvegicus (Rat).